We begin with the raw amino-acid sequence, 930 residues long: Protocadherin gamma-B6 (930 aa).

The N-terminal stretch at 1–30 (MGGSCAQRRRAGPRQVLFPLLLPLFYPTLS) is a signal peptide. Cadherin domains are found at residues 31-133 (EPIR…APQF), 134-242 (DKKE…PPVF), 243-347 (SRDE…SPEI), 348-452 (IITS…APVF), 453-562 (DQTS…APRV), and 570-675 (DGSA…LPDL). Residues 31–691 (EPIRYSIPEE…SDPQAELQFY (661 aa)) lie on the Extracellular side of the membrane. N-linked (GlcNAc...) asparagine glycans are attached at residues N304, N419, and N545. Residues 692–712 (LVVALALISVLFLLAVILAIA) traverse the membrane as a helical segment. The Cytoplasmic portion of the chain corresponds to 713–930 (LRLRRSLSPA…KKKSGKKEKK (218 aa)). Disordered stretches follow at residues 791–839 (PHGG…WPNN) and 900–930 (ATLT…KEKK). Over residues 800 to 839 (HPETLTSQAPPNTDWRFSQAQRPGTSGSQNGDDTGTWPNN) the composition is skewed to polar residues. The span at 920 to 930 (NKKKSGKKEKK) shows a compositional bias: basic residues.

The protein localises to the cell membrane. Potential calcium-dependent cell-adhesion protein. May be involved in the establishment and maintenance of specific neuronal connections in the brain. In Homo sapiens (Human), this protein is Protocadherin gamma-B6 (PCDHGB6).